Reading from the N-terminus, the 150-residue chain is Transthyretin (150 aa).

Positions 1–20 (MAFHSMLLVFLAGLVFLTEA) are cleaved as a signal peptide. A Sulfocysteine modification is found at cysteine 33. L-thyroxine contacts are provided by lysine 38, glutamate 77, and serine 140.

The protein belongs to the transthyretin family. Homotetramer. Dimer of dimers. In the homotetramer, subunits assemble around a central channel that can accommodate two ligand molecules. Interacts with RBP4. In terms of processing, sulfonation of the reactive cysteine Cys-33 enhances the stability of the native conformation of TTR, avoiding misassembly of the protein leading to amyloid formation. Strongly expressed in the brain, and to a lesser extent in the eye.

Its subcellular location is the secreted. Its function is as follows. Thyroid hormone-binding protein, with a much higher binding affinity for triiodothyronine (T3) than for thyroxine (T4). Probably transports triiodothyronine from the bloodstream to the brain. This chain is Transthyretin (TTR), found in Crocodylus porosus (Saltwater crocodile).